We begin with the raw amino-acid sequence, 499 residues long: Protein NODULATION SIGNALING PATHWAY 2 (499 aa).

The tract at residues 64 to 106 (NNTGPAFSDHTASTTSEEEEEEEATTTTMTTTTTTTTTTPEAA) is disordered. A compositionally biased stretch (low complexity) spans 88–104 (TTTTMTTTTTTTTTTPE). In terms of domain architecture, GRAS spans 106–491 (ADDDFKGLRL…RRLLSASLWT (386 aa)). Residues 113 to 182 (LRLVHLLMAG…AGGAYNSSSK (70 aa)) form a leucine repeat I (LRI) region. Residues 201–265 (FQLLQDMSPY…PNGPHLRITA (65 aa)) form a VHIID region. Residues 232 to 236 (VHIVD) carry the VHIID motif. Positions 281 to 313 (ETGRRLTAFATSLGQPFSFHHSRLESDETFRPA) are leucine repeat II (LRII). Positions 323-414 (LVFNCMLNLP…RVFLGPRIVG (92 aa)) are PFYRE. The interval 417–491 (ARIYRTGGGG…RRLLSASLWT (75 aa)) is SAW.

Belongs to the GRAS family. As to quaternary structure, interacts with IPN2. Binds to RAD1. Interacts with RAM1. As to expression, highly expressed in roots.

It localises to the nucleus membrane. It is found in the endoplasmic reticulum. Functionally, transcriptional regulator essential for Nod-factor-induced gene expression. Acts downstream of calcium spiking and a calcium/calmodulin-dependent protein kinase required for activation of early nodulation gene expression. Transcription factor involved in the induction of NIN and ENOD40 genes, which are required for rhizobial infection and early nodule development. Does not seem to contribute to the early steps of the arbuscular mycorrhizal fungus infection and colonization processes in roots. Transcription factor involved in the positive regulation of the beta-carotene isomerase D27, which participates in a pathway leading to biosynthesis of strigolactones in roots. The chain is Protein NODULATION SIGNALING PATHWAY 2 from Lotus japonicus (Lotus corniculatus var. japonicus).